Here is a 209-residue protein sequence, read N- to C-terminus: Egg case collagen (209 aa).

The tract at residues 1–129 (VYMSGXGKPP…YKGNHGFYLV (129 aa)) is nonhelical region. The tract at residues 130–209 (LPAGYPGTPG…DPGLPGEYGV (80 aa)) is triple-helical region. The interval 138–209 (PGTPGPRGGP…DPGLPGEYGV (72 aa)) is disordered. Residues 142-162 (GPRGGPGDPGMPGEPGVGFPG) are compositionally biased toward gly residues.

Functionally, major component of the egg case wall which is secreted by the oviduct. The egg case combines mechanical strength and toughness with high permeability to small molecules and ions. In Scyliorhinus canicula (Small-spotted catshark), this protein is Egg case collagen.